Consider the following 565-residue polypeptide: uncharacterized protein (565 aa).

5 consecutive transmembrane segments (helical) span residues 4–26, 33–55, 68–90, 97–119, and 162–184; these read FVQFLGSNPYILLFLTIGLAVWV, GYGLGAVAAAIVVGCLVATVGAA, SLLYYLFMYGVGLRVGPSFVNAL, YAILAIIAPILGLAIVVLGTQFF, and ISAMIALSYGITYIWGTVGIILL. 2 RCK C-terminal domains span residues 210-295 and 296-379; these read PNVD…LGPE and VPDA…IFGV. A run of 5 helical transmembrane segments spans residues 389 to 411, 415 to 432, 453 to 472, 482 to 504, and 539 to 561; these read LLTLSFGMILGFLIGLIEVPAFG, GLGNAGGLLLSGIIVSSI, LGLIGFVAIVGINAGADLLT, IFIVGFLASTIPPIIVWAIGFHI, and WLGFPVGYAVSGVLLTVFGYFAM.

It belongs to the AAE transporter (TC 2.A.81) family.

The protein resides in the cell membrane. This is an uncharacterized protein from Bordetella parapertussis (strain 12822 / ATCC BAA-587 / NCTC 13253).